The following is a 334-amino-acid chain: GTPase Obg (334 aa).

One can recognise an Obg domain in the interval 1 to 159; sequence MRFVDEVVIK…KEVRLELNLL (159 aa). Residues 160–331 enclose the OBG-type G domain; sequence ADVALLGLPN…LAKKLNEFLQ (172 aa). Residues 166–173, 191–195, 212–215, 282–285, and 312–314 each bind GTP; these read GLPNAGKS, FTTMY, DIPG, NKID, and SAA. Serine 173 and threonine 193 together coordinate Mg(2+).

The protein belongs to the TRAFAC class OBG-HflX-like GTPase superfamily. OBG GTPase family. As to quaternary structure, monomer. Mg(2+) is required as a cofactor.

It localises to the cytoplasm. Its function is as follows. An essential GTPase which binds GTP, GDP and possibly (p)ppGpp with moderate affinity, with high nucleotide exchange rates and a fairly low GTP hydrolysis rate. Plays a role in control of the cell cycle, stress response, ribosome biogenesis and in those bacteria that undergo differentiation, in morphogenesis control. The chain is GTPase Obg from Francisella tularensis subsp. holarctica (strain FTNF002-00 / FTA).